The following is a 95-amino-acid chain: Small ribosomal subunit protein bS6 (95 aa).

It belongs to the bacterial ribosomal protein bS6 family.

In terms of biological role, binds together with bS18 to 16S ribosomal RNA. The protein is Small ribosomal subunit protein bS6 of Bacillus licheniformis (strain ATCC 14580 / DSM 13 / JCM 2505 / CCUG 7422 / NBRC 12200 / NCIMB 9375 / NCTC 10341 / NRRL NRS-1264 / Gibson 46).